Consider the following 457-residue polypeptide: Tubulin alpha chain (457 aa).

GTP is bound by residues Gln-12, Glu-77, Ser-146, Gly-150, Thr-151, Thr-186, Asn-213, and Asn-235. Residue Glu-77 coordinates Mg(2+).

Belongs to the tubulin family. In terms of assembly, dimer of alpha and beta chains. A typical microtubule is a hollow water-filled tube with an outer diameter of 25 nm and an inner diameter of 15 nM. Alpha-beta heterodimers associate head-to-tail to form protofilaments running lengthwise along the microtubule wall with the beta-tubulin subunit facing the microtubule plus end conferring a structural polarity. Microtubules usually have 13 protofilaments but different protofilament numbers can be found in some organisms and specialized cells. It depends on Mg(2+) as a cofactor. In terms of processing, undergoes a tyrosination/detyrosination cycle, the cyclic removal and re-addition of a C-terminal tyrosine residue by the enzymes tubulin tyrosine carboxypeptidase (TTCP) and tubulin tyrosine ligase (TTL), respectively.

It localises to the cytoplasm. The protein resides in the cytoskeleton. It catalyses the reaction GTP + H2O = GDP + phosphate + H(+). In terms of biological role, tubulin is the major constituent of microtubules, a cylinder consisting of laterally associated linear protofilaments composed of alpha- and beta-tubulin heterodimers. Microtubules grow by the addition of GTP-tubulin dimers to the microtubule end, where a stabilizing cap forms. Below the cap, tubulin dimers are in GDP-bound state, owing to GTPase activity of alpha-tubulin. The polypeptide is Tubulin alpha chain (tubA) (Dictyostelium discoideum (Social amoeba)).